The primary structure comprises 212 residues: uncharacterized protein (212 aa).

Pentapeptide repeat domains lie at 63–102 (VSFR…KMVG), 103–142 (MNVA…ALMQ), and 143–182 (SECS…RFEQ).

This is an uncharacterized protein from Bacillus subtilis (strain 168).